A 638-amino-acid polypeptide reads, in one-letter code: Plasma kallikrein (638 aa).

The signal sequence occupies residues 1–19 (MILFKQVGYFVSLFATVSC). 4 consecutive Apple domains span residues 21–104 (CLSQ…LKQC), 111–194 (CHQD…LKSC), 201–284 (CPMD…LFTC), and 292–375 (CHFK…LRLC). 18 cysteine pairs are disulfide-bonded: Cys-21-Cys-104, Cys-47-Cys-77, Cys-51-Cys-57, Cys-111-Cys-194, Cys-137-Cys-166, Cys-141-Cys-147, Cys-201-Cys-284, Cys-227-Cys-256, Cys-231-Cys-237, Cys-292-Cys-375, Cys-318-Cys-347, Cys-322-Cys-328, Cys-340-Cys-345, Cys-383-Cys-503, Cys-419-Cys-435, Cys-517-Cys-584, Cys-548-Cys-563, and Cys-574-Cys-602. A glycan (N-linked (GlcNAc...) asparagine) is linked at Asn-127. Asn-215 carries an N-linked (GlcNAc...) asparagine glycan. Asn-308 carries an N-linked (GlcNAc...) asparagine glycan. Positions 391 to 626 (IVGGTNSSLG…YIDWILEKIQ (236 aa)) constitute a Peptidase S1 domain. Asn-396 carries N-linked (GlcNAc...) asparagine glycosylation. The Charge relay system role is filled by His-434. Asn-453 is a glycosylation site (N-linked (GlcNAc...) asparagine). The active-site Charge relay system is Asp-483. A glycan (N-linked (GlcNAc...) asparagine) is linked at Asn-494. Catalysis depends on Ser-578, which acts as the Charge relay system.

This sequence belongs to the peptidase S1 family. Plasma kallikrein subfamily. As to quaternary structure, forms a heterodimer with SERPINA5. The zymogen is activated by factor XIIa, which cleaves the molecule into a light chain, which contains the active site, and a heavy chain, which associates with HMW kininogen. These chains are linked by one or more disulfide bonds.

It localises to the secreted. The catalysed reaction is Cleaves selectively Arg-|-Xaa and Lys-|-Xaa bonds, including Lys-|-Arg and Arg-|-Ser bonds in (human) kininogen to release bradykinin.. With respect to regulation, inhibited by SERPINA5. Functionally, the enzyme cleaves Lys-Arg and Arg-Ser bonds. It activates, in a reciprocal reaction, factor XII after its binding to a negatively charged surface. It also releases bradykinin from HMW kininogen and may also play a role in the renin-angiotensin system by converting prorenin into renin. The sequence is that of Plasma kallikrein (Klkb1) from Rattus norvegicus (Rat).